The following is a 157-amino-acid chain: Heat shock protein beta-9 (157 aa).

Positions 1–17 (MQRVGSSLPSGSQSASQ) are enriched in low complexity. Disordered stretches follow at residues 1 to 20 (MQRVGSSLPSGSQSASQCPS) and 136 to 157 (PPSEAQTGPASRFRSRGSKKLA). The sHSP domain maps to 35–148 (QRLTEDAAAV…EAQTGPASRF (114 aa)). Residues 148–157 (FRSRGSKKLA) are compositionally biased toward basic residues.

This sequence belongs to the small heat shock protein (HSP20) family.

It is found in the cytoplasm. The protein resides in the nucleus. The chain is Heat shock protein beta-9 (HSPB9) from Bos taurus (Bovine).